We begin with the raw amino-acid sequence, 564 residues long: Potassium-transporting ATPase potassium-binding subunit (564 aa).

Helical transmembrane passes span 4–24 (YDYW…PFLG), 67–87 (MLAL…ILLF), 135–155 (AGLT…LVAL), 179–199 (LYGL…QGVP), 254–274 (WANL…VFTF), 286–306 (AILG…LWAE), 382–402 (AGMY…GLMI), 420–440 (LLVV…AIAA), 487–507 (LMLG…VLAL), and 528–548 (GPLF…LTFL).

This sequence belongs to the KdpA family. The system is composed of three essential subunits: KdpA, KdpB and KdpC.

Its subcellular location is the cell inner membrane. Its function is as follows. Part of the high-affinity ATP-driven potassium transport (or Kdp) system, which catalyzes the hydrolysis of ATP coupled with the electrogenic transport of potassium into the cytoplasm. This subunit binds the periplasmic potassium ions and delivers the ions to the membrane domain of KdpB through an intramembrane tunnel. The chain is Potassium-transporting ATPase potassium-binding subunit from Pseudomonas fluorescens (strain SBW25).